We begin with the raw amino-acid sequence, 333 residues long: NADH dehydrogenase (ubiquinone) complex I, assembly factor 6 (333 aa).

Residues 1–44 (MATSMLGSVPGPRPFGLAGLFRRRPPRDPWERVRRLPRLSAVRR) constitute a mitochondrion transit peptide.

The protein belongs to the NDUFAF6 family.

Its subcellular location is the mitochondrion inner membrane. Involved in the assembly of mitochondrial NADH:ubiquinone oxidoreductase complex (complex I) at early stages. May play a role in the biogenesis of complex I subunit MT-ND1. This Rattus norvegicus (Rat) protein is NADH dehydrogenase (ubiquinone) complex I, assembly factor 6 (Ndufaf6).